Consider the following 180-residue polypeptide: Large ribosomal subunit protein uL6 (180 aa).

Belongs to the universal ribosomal protein uL6 family. In terms of assembly, part of the 50S ribosomal subunit.

Functionally, this protein binds to the 23S rRNA, and is important in its secondary structure. It is located near the subunit interface in the base of the L7/L12 stalk, and near the tRNA binding site of the peptidyltransferase center. In Dictyoglomus turgidum (strain DSM 6724 / Z-1310), this protein is Large ribosomal subunit protein uL6.